We begin with the raw amino-acid sequence, 629 residues long: Pumilio homolog 3 (629 aa).

Basic residues-rich tracts occupy residues 1–10 (MEGKPRKKSF) and 18–37 (PSFK…RPFK). The disordered stretch occupies residues 1–92 (MEGKPRKKSF…EGDERKKPKW (92 aa)). Basic and acidic residues predominate over residues 62 to 92 (KPTDGKFAKKRKFPGDRIKQEEGDERKKPKW). The Nuclear localization signal signature appears at 88–100 (KKPKWDEFKQKKK). The PUM-HD domain occupies 120–473 (RAKQVWEMVR…ELLEAASPSL (354 aa)). 11 Pumilio repeats span residues 160-195 (HDST…LSKS), 196-231 (KYAR…MLRH), 232-260 (SEAS…ELYG), 272-308 (PTLE…VIKH), 309-344 (SLVH…MAHT), 345-380 (HDGA…FAMG), 381-418 (EYAH…IISN), 419-487 (KHGK…MVMD), 488-534 (KSCC…MAEH), 535-579 (PAGH…WASV), and 580-618 (NRGA…LQNS).

In adult, expressed at high levels in eye and ovary and at lower levels in brain, testis and head kidney. In the adult ovary, prominently expressed in early immature follicles.

It localises to the nucleus. The protein localises to the nucleolus. It is found in the nucleoplasm. Its subcellular location is the chromosome. Functionally, inhibits the poly(ADP-ribosyl)ation activity of PARP1 and the degradation of PARP1 by CASP3 following genotoxic stress. Binds to double-stranded RNA or DNA without sequence specificity. Involved in development of the eye and of primordial germ cells. The protein is Pumilio homolog 3 (pum3) of Danio rerio (Zebrafish).